Reading from the N-terminus, the 585-residue chain is Zinc finger protein Eos (585 aa).

2 disordered regions span residues 1-43 and 68-98; these read MHTP…PDFL and EKEF…SANS. A compositionally biased stretch (basic and acidic residues) spans 25–34; that stretch reads QGKDNLERDP. Positions 79-98 are enriched in polar residues; sequence SVSTPNSQHSSPSRSLSANS. A Glycyl lysine isopeptide (Lys-Gly) (interchain with G-Cter in SUMO2) cross-link involves residue Lys100. The residue at position 105 (Ser105) is a Phosphoserine. 4 C2H2-type zinc fingers span residues 159 to 181, 187 to 209, 215 to 237, and 248 to 271; these read LKCD…KRSH, FHCN…IKLH, FKCP…LRTH, and YKCN…ERCH. Residues 281-585 form an interaction with FOXP3 region; it reads AQALAGQPGD…HIVRGEHKVG (305 aa). At Lys335 the chain carries N6-acetyllysine. The tract at residues 410–489 is disordered; sequence PGRLELPGSR…QPPPTIVVGR (80 aa). The CTBP-binding motif PEDLA motif lies at 425-429; it reads PEDLA. Pro residues predominate over residues 475–484; that stretch reads QGPPPQPPPT. Residue Lys500 forms a Glycyl lysine isopeptide (Lys-Gly) (interchain with G-Cter in SUMO2) linkage. C2H2-type zinc fingers lie at residues 530-552 and 558-582; these read FKCE…MGCH and FECN…RGEH.

It belongs to the Ikaros C2H2-type zinc-finger protein family. Self-associates. Interacts with other family members; IKZF1, IKZF2, IKZF3 and IKZF5. Interacts with CTBP2. Interacts with SPI1, MITF, FOXP3 and CTBP1. Highly expressed in skeletal muscle, low levels of expression in heart, thymus, kidney, liver, and spleen. Expressed in the hematopoietic cell lines MOLT-4, NALM-6 and K-562. Highly expressed in THP-1 and M-07e cell lines, which have characteristics of myeloid and early megakaryocytic cells respectively.

The protein resides in the nucleus. DNA-binding protein that binds to the 5'GGGAATRCC-3' Ikaros-binding sequence. Transcriptional repressor. Interacts with SPI1 and MITF to repress transcription of the CTSK and ACP5 promoters via recruitment of corepressors SIN3A and CTBP2. May be involved in the development of central and peripheral nervous systems. Essential for the inhibitory function of regulatory T-cells (Treg). Mediates FOXP3-mediated gene silencing in regulatory T-cells (Treg) via recruitment of corepressor CTBP1. This is Zinc finger protein Eos (IKZF4) from Homo sapiens (Human).